Consider the following 368-residue polypeptide: SH3 domain-containing protein 2 (368 aa).

2 coiled-coil regions span residues 1–21 and 146–210; these read MDAI…QQQA and LEDA…LGKE. The BAR domain maps to 1 to 264; sequence MDAIRKQASR…MVSERQRIEA (264 aa). A disordered region spans residues 258-281; it reads ERQRIEAPSTPSSADSMPPPPSYE. An SH3 domain is found at 299-358; the sequence is MGYFLGEVLFPYHGVTDVELSLSTGEYVVVRKVTGSGWAEGECKGKAGWFPYGYIERRER.

In terms of assembly, homodimer. Interacts with FREE1. Interacts (via SH3 domain) with ATG8E and ATG8F. Component of a phosphoinositide 3-kinase (PI3K) complex containing ATG6, SH3P2 and FREE1. Binds to SH3P3 and DRP1A. Forms a complex made of SH3P2 and DRP1A and triggers its accumulation at the cell plate. Highly expressed in seedlings. Detected in flowers, leaves and stems.

Its subcellular location is the cytoplasm. The protein resides in the cytoplasmic vesicle. The protein localises to the clathrin-coated vesicle. It is found in the cell membrane. It localises to the late endosome. Its subcellular location is the autophagosome membrane. Its function is as follows. Regulator for autophaosome formation and/or maturation. Binds phosphatidylinositol-phosphate; highest affinity for vesicles containing PtdIns(3,4,5)P(3), followed by those containing PtdIns(4,5)P(2) and PtdIns(3,4)P(2), with minimal binding to phosphatidylinositol monophosphates, including PtdIns(3)P. Together with DRP1A, converts the fused vesicles to tubular structures at the cell plate during cytokinesis. The sequence is that of SH3 domain-containing protein 2 from Arabidopsis thaliana (Mouse-ear cress).